Reading from the N-terminus, the 455-residue chain is Golgi pH regulator (455 aa).

Helical transmembrane passes span 5-25, 46-66, 79-99, 114-134, and 150-170; these read IDSS…WLFF, VTFA…LGVL, LCVI…YFIV, CLLW…FPIL, and VGVI…VNCP. Asn180 is a glycosylation site (N-linked (GlcNAc...) asparagine). 4 helical membrane-spanning segments follow: residues 288 to 308, 343 to 363, 378 to 398, and 425 to 445; these read FLGY…TINI, ISFI…LITL, VIVL…VLLI, and WFDV…YLAH.

It belongs to the Golgi pH regulator (TC 1.A.38) family. As to quaternary structure, homotrimer. Interacts with RABL3; the interaction stabilizes GPR89.

Its subcellular location is the golgi apparatus membrane. The enzyme catalyses iodide(out) = iodide(in). The catalysed reaction is chloride(in) = chloride(out). It catalyses the reaction bromide(in) = bromide(out). It carries out the reaction fluoride(in) = fluoride(out). Its function is as follows. Voltage-gated channel that enables the transfer of monoatomic anions such as iodide, chloride, bromide and fluoride which may function in counter-ion conductance and participates in Golgi acidification. Plays a role in lymphocyte development, probably by acting as a RABL3 effector in hematopoietic cells. The polypeptide is Golgi pH regulator (Mus musculus (Mouse)).